Here is a 202-residue protein sequence, read N- to C-terminus: Nucleoside triphosphate pyrophosphatase (202 aa).

Catalysis depends on Asp79, which acts as the Proton acceptor.

The protein belongs to the Maf family. It depends on a divalent metal cation as a cofactor.

It localises to the cytoplasm. The catalysed reaction is a ribonucleoside 5'-triphosphate + H2O = a ribonucleoside 5'-phosphate + diphosphate + H(+). The enzyme catalyses a 2'-deoxyribonucleoside 5'-triphosphate + H2O = a 2'-deoxyribonucleoside 5'-phosphate + diphosphate + H(+). Nucleoside triphosphate pyrophosphatase. May have a dual role in cell division arrest and in preventing the incorporation of modified nucleotides into cellular nucleic acids. This Bradyrhizobium diazoefficiens (strain JCM 10833 / BCRC 13528 / IAM 13628 / NBRC 14792 / USDA 110) protein is Nucleoside triphosphate pyrophosphatase.